Consider the following 260-residue polypeptide: Snake venom serine protease homolog (260 aa).

The first 18 residues, 1 to 18 (MVLIRVLANLLILQLSYA), serve as a signal peptide directing secretion. The propeptide occupies 19-24 (QKASEL). A Peptidase S1 domain is found at 25 to 251 (IIGGDECNIN…YTEWIRSIIA (227 aa)). 6 disulfides stabilise this stretch: C31-C165, C52-C68, C100-C258, C144-C212, C176-C191, and C202-C227. N83 carries an N-linked (GlcNAc...) asparagine glycan.

Belongs to the peptidase S1 family. Snake venom subfamily. Expressed by the venom gland.

Its subcellular location is the secreted. In terms of biological role, snake venom serine protease homolog that may act in the hemostasis system of the prey. The polypeptide is Snake venom serine protease homolog (Bothrops jararacussu (Jararacussu)).